The chain runs to 61 residues: Small ribosomal subunit protein uS14 (61 aa).

Residues Cys24, Cys27, Cys40, and Cys43 each contribute to the Zn(2+) site.

Belongs to the universal ribosomal protein uS14 family. Zinc-binding uS14 subfamily. In terms of assembly, part of the 30S ribosomal subunit. Contacts proteins S3 and S10. Requires Zn(2+) as cofactor.

Its function is as follows. Binds 16S rRNA, required for the assembly of 30S particles and may also be responsible for determining the conformation of the 16S rRNA at the A site. The sequence is that of Small ribosomal subunit protein uS14 from Anaeromyxobacter sp. (strain Fw109-5).